Reading from the N-terminus, the 476-residue chain is ENTH domain-containing protein C794.11c (476 aa).

The ENTH domain maps to 30–154 (YTSMEARVRE…VELLNDSERI (125 aa)). Disordered regions lie at residues 157-198 (ERKR…GSYR), 213-308 (NGYH…GFGD), 410-429 (QAGLGLTSQQPTAAKSSGSN), and 444-472 (VHQENSTRERVVSSSSEPVSKTQNFLDND). Phosphoserine is present on S173. Composition is skewed to low complexity over residues 178 to 198 (RISTSSKSRFPSFGSSRGSYR) and 213 to 222 (NGYHDSSSMS). The residue at position 228 (S228) is a Phosphoserine. Residues 229–240 (DNDVEEYNEDGD) are compositionally biased toward acidic residues. Y235 is subject to Phosphotyrosine. Phosphoserine is present on residues S243 and S244. Residues 262–271 (QSDKAPEQPK) show a composition bias toward basic and acidic residues. The segment covering 444–454 (VHQENSTRERV) has biased composition (basic and acidic residues). S459 carries the phosphoserine modification.

This Schizosaccharomyces pombe (strain 972 / ATCC 24843) (Fission yeast) protein is ENTH domain-containing protein C794.11c.